The sequence spans 72 residues: Translation initiation factor IF-1 (72 aa).

The S1-like domain maps to 1-72 (MAKADVIEVE…TKGRITFRFK (72 aa)).

Belongs to the IF-1 family. As to quaternary structure, component of the 30S ribosomal translation pre-initiation complex which assembles on the 30S ribosome in the order IF-2 and IF-3, IF-1 and N-formylmethionyl-tRNA(fMet); mRNA recruitment can occur at any time during PIC assembly.

Its subcellular location is the cytoplasm. Functionally, one of the essential components for the initiation of protein synthesis. Stabilizes the binding of IF-2 and IF-3 on the 30S subunit to which N-formylmethionyl-tRNA(fMet) subsequently binds. Helps modulate mRNA selection, yielding the 30S pre-initiation complex (PIC). Upon addition of the 50S ribosomal subunit IF-1, IF-2 and IF-3 are released leaving the mature 70S translation initiation complex. This is Translation initiation factor IF-1 from Limosilactobacillus reuteri (strain DSM 20016) (Lactobacillus reuteri).